The chain runs to 299 residues: MTAEIIDGKAFAAGVRAKVAHNVETLRDTHGITPGLAVVLVGEDPASEVYVANKHRQTVEVGMASFSHKLPAKTSEADLFALIDQLNADPAVHGILCQFPVPEHLNERAVVARIDPAKDVDGLSVVNAGLLASGERGLVSCTPLGCLMLLRDRLGDLSGLEAVVIGRSNLFGKPMGQLLLRENATVTMAHSRTRDLAQVCRRADILVAAVGRAEMVKADWVKPGATVIDVGITRQPHPDDPDKTRLLGDVDFAAVAEVAGAITPVPGGVGPMTIACLLANTVTACCRAHGLPEPDGLAV.

Residues 166–168 (GRS), serine 191, and isoleucine 232 contribute to the NADP(+) site.

Belongs to the tetrahydrofolate dehydrogenase/cyclohydrolase family. In terms of assembly, homodimer.

It carries out the reaction (6R)-5,10-methylene-5,6,7,8-tetrahydrofolate + NADP(+) = (6R)-5,10-methenyltetrahydrofolate + NADPH. The enzyme catalyses (6R)-5,10-methenyltetrahydrofolate + H2O = (6R)-10-formyltetrahydrofolate + H(+). The protein operates within one-carbon metabolism; tetrahydrofolate interconversion. Functionally, catalyzes the oxidation of 5,10-methylenetetrahydrofolate to 5,10-methenyltetrahydrofolate and then the hydrolysis of 5,10-methenyltetrahydrofolate to 10-formyltetrahydrofolate. In Dinoroseobacter shibae (strain DSM 16493 / NCIMB 14021 / DFL 12), this protein is Bifunctional protein FolD.